A 708-amino-acid polypeptide reads, in one-letter code: Nicastrin (708 aa).

Positions 1–27 (MATTRGGSGPDPGSRGLLLLSFSVVLA) are cleaved as a signal peptide. At 28–668 (GLCGGNSVER…IFLIASKELE (641 aa)) the chain is on the lumenal side. Residues asparagine 44, asparagine 54, and asparagine 128 are each glycosylated (N-linked (GlcNAc...) asparagine). A disulfide bridge connects residues cysteine 49 and cysteine 61. Cysteine 139 and cysteine 158 are oxidised to a cystine. N-linked (GlcNAc...) asparagine glycans are attached at residues asparagine 186 and asparagine 203. Disulfide bonds link cysteine 194–cysteine 212 and cysteine 229–cysteine 247. Residues asparagine 263, asparagine 386, asparagine 434, asparagine 463, asparagine 505, asparagine 529, asparagine 561, asparagine 572, asparagine 579, asparagine 593, and asparagine 611 are each glycosylated (N-linked (GlcNAc...) asparagine). Residues cysteine 585 and cysteine 619 are joined by a disulfide bond. Residues 669-689 (FITLIVGFSTLVFSLIVTYCI) form a helical membrane-spanning segment. Residues 690-708 (NAKADVLFVAPREPGAVSY) are Cytoplasmic-facing.

The protein belongs to the nicastrin family. In terms of assembly, component of the gamma-secretase complex. The functional gamma-secretase complex is composed of at least four polypeptides: a presenilin homodimer (PSEN1 or PSEN2), nicastrin (NCSTN), APH1 (APH1A or APH1B) and PEN2. Binds to proteolytic processed C-terminal fragments C83 and C99 of the amyloid precursor protein (APP). Interacts with PSEN1 and PSEN2. N-glycosylated.

The protein localises to the membrane. Its subcellular location is the cytoplasmic vesicle membrane. It is found in the melanosome. Its function is as follows. Essential subunit of the gamma-secretase complex, an endoprotease complex that catalyzes the intramembrane cleavage of integral membrane proteins such as Notch receptors and APP (amyloid-beta precursor protein). The gamma-secretase complex plays a role in Notch and Wnt signaling cascades and regulation of downstream processes via its role in processing key regulatory proteins, and by regulating cytosolic CTNNB1 levels. The sequence is that of Nicastrin (Ncstn) from Mus musculus (Mouse).